Consider the following 58-residue polypeptide: Large ribosomal subunit protein eL37 (58 aa).

Zn(2+) is bound by residues Cys-20, Cys-23, Cys-35, and Cys-38. Residues 20-38 (CRRCGEKSYHVKKERCSSC) form a C4-type zinc finger. The segment at 39–58 (GFGDSASRRGYAWQSKSGDN) is disordered.

Belongs to the eukaryotic ribosomal protein eL37 family. Zn(2+) serves as cofactor.

Its function is as follows. Binds to the 23S rRNA. This is Large ribosomal subunit protein eL37 from Halorubrum lacusprofundi (strain ATCC 49239 / DSM 5036 / JCM 8891 / ACAM 34).